Here is a 306-residue protein sequence, read N- to C-terminus: Elongation factor Ts (306 aa).

Residues 79-82 (TDFV) form an involved in Mg(2+) ion dislocation from EF-Tu region.

The protein belongs to the EF-Ts family.

It localises to the cytoplasm. In terms of biological role, associates with the EF-Tu.GDP complex and induces the exchange of GDP to GTP. It remains bound to the aminoacyl-tRNA.EF-Tu.GTP complex up to the GTP hydrolysis stage on the ribosome. The protein is Elongation factor Ts of Mesorhizobium japonicum (strain LMG 29417 / CECT 9101 / MAFF 303099) (Mesorhizobium loti (strain MAFF 303099)).